Reading from the N-terminus, the 873-residue chain is Kinase suppressor of Ras 1 (873 aa).

3 disordered regions span residues 1–24 (MDRA…GAAA), 174–230 (EHKM…PGLS), and 251–281 (LHSF…PSRK). A mediates association with membranes region spans residues 1–170 (MDRAALRAAA…ALTCLRKVTG (170 aa)). Residues 206–216 (ASTQGPRSISV) are compositionally biased toward polar residues. Residues Thr-256 and Thr-260 each carry the phosphothreonine modification. Ser-297 carries the phosphoserine; by MARK3 modification. Residue Ser-320 is modified to Phosphoserine. The Phorbol-ester/DAG-type zinc finger occupies 333 to 377 (THRFSTKSWLSQVCNVCQKSMIFGVKCKHCRLKCHNKCTKEAPAC). His-334 provides a ligand contact to Zn(2+). The residue at position 337 (Ser-337) is a Phosphoserine. The Zn(2+) site is built by Cys-346, Cys-349, Cys-359, Cys-362, His-367, Cys-370, and Cys-377. Ser-392 is modified (phosphoserine; by MARK3). A Phosphothreonine modification is found at Thr-411. Disordered stretches follow at residues 416–473 (LTKK…RFSF) and 506–544 (HEAE…PISR). The span at 429-458 (SSSNPSSTTSSTPSSPAPFLTSSNPSSATT) shows a compositional bias: low complexity. Basic and acidic residues predominate over residues 506–519 (HEAEAEEPEAGKSE). Phosphoserine is present on Ser-518. Residues 520-530 (AEDDEEDEVDD) show a composition bias toward acidic residues. The region spanning 563–833 (VELGEPIGQG…MDMLERLPKL (271 aa)) is the Protein kinase domain. 569–577 (IGQGRWGRV) is an ATP binding site. Asp-683 (proton acceptor) is an active-site residue. The ATP site is built by Lys-685 and Asp-700. Phosphoserine is present on Ser-838.

This sequence belongs to the protein kinase superfamily. TKL Ser/Thr protein kinase family. In terms of assembly, homodimer. Heterodimerizes (via N-terminus) with BRAF (via N-terminus) in a MAP2K1/MEK1 or MAP2K2/MEK2-dependent manner. Interacts with MAP2K1/MEK1 and MAP2K2/MEK2. Binding to MAP2K1/MEK1 releases the intramolecular inhibitory interaction between KSR1 N-terminus and kinase domains which is required for the subsequent RSK1 dimerization with BRAF. Identified in a complex with AKAP13, MAP2K1 and BRAF. Interacts with AKAP13 and BRAF. Interacts with RAF and MAPK/ERK, in a Ras-dependent manner. Interacts with 14-3-3 proteins including YWHAB. Interacts with HSP90AA1/HSP90, YWHAE/14-3-3 and CDC37. The binding of 14-3-3 proteins to phosphorylated KSR1 prevents the membrane localization. Interacts with MARK3/C-TAK1. Interacts with PPP2R1A and PPP2CA. Interacts with VRK2. Phosphorylated on Ser-297 and, to a higher extent, on Ser-392 by MARK3. Dephosphorylated on Ser-392 by PPP2CA. Phosphorylated KSR1 is cytoplasmic and dephosphorylated KSR1 is membrane-associated. Phosphorylated by PKA at Ser-838. Phosphorylation at Ser-838 is required for cAMP-dependent activation of MAPK1 and/or MAPK3. As to expression, expressed in brain, spleen and testis. Isoform 1 is highly expressed spleen and weakly in testis, and isoform 2 is highly expressed in brain and weakly in testis.

The protein localises to the cytoplasm. It is found in the membrane. It localises to the cell membrane. Its subcellular location is the cell projection. The protein resides in the ruffle membrane. The protein localises to the endoplasmic reticulum membrane. The enzyme catalyses L-seryl-[protein] + ATP = O-phospho-L-seryl-[protein] + ADP + H(+). The catalysed reaction is L-threonyl-[protein] + ATP = O-phospho-L-threonyl-[protein] + ADP + H(+). Part of a multiprotein signaling complex which promotes phosphorylation of Raf family members and activation of downstream MAP kinases. Independently of its kinase activity, acts as MAP2K1/MEK1 and MAP2K2/MEK2-dependent allosteric activator of BRAF; upon binding to MAP2K1/MEK1 or MAP2K2/MEK2, dimerizes with BRAF and promotes BRAF-mediated phosphorylation of MAP2K1/MEK1 and/or MAP2K2/MEK2. Promotes activation of MAPK1 and/or MAPK3, both in response to EGF and to cAMP. Its kinase activity is unsure. Some protein kinase activity has been detected in vitro, however the physiological relevance of this activity is unknown. The chain is Kinase suppressor of Ras 1 (Ksr1) from Mus musculus (Mouse).